The primary structure comprises 363 residues: tRNA dimethylallyltransferase (363 aa).

65 to 72 (GPTASGKS) serves as a coordination point for ATP. Residue 67-72 (TASGKS) coordinates substrate. Interaction with substrate tRNA stretches follow at residues 90–93 (DSMQ) and 214–218 (QRLIR).

Belongs to the IPP transferase family. Monomer. Mg(2+) serves as cofactor.

It carries out the reaction adenosine(37) in tRNA + dimethylallyl diphosphate = N(6)-dimethylallyladenosine(37) in tRNA + diphosphate. Catalyzes the transfer of a dimethylallyl group onto the adenine at position 37 in tRNAs that read codons beginning with uridine, leading to the formation of N6-(dimethylallyl)adenosine (i(6)A). This chain is tRNA dimethylallyltransferase, found in Rickettsia rickettsii (strain Sheila Smith).